Consider the following 39-residue polypeptide: Photosystem II reaction center protein Y (39 aa).

A helical transmembrane segment spans residues 5 to 23 (VLIVLTPLLIAGGWAVFNI).

Belongs to the PsbY family. In terms of assembly, PSII is composed of 1 copy each of membrane proteins PsbA, PsbB, PsbC, PsbD, PsbE, PsbF, PsbH, PsbI, PsbJ, PsbK, PsbL, PsbM, PsbT, PsbX, PsbY, PsbZ, Psb30/Ycf12, peripheral proteins PsbO, CyanoQ (PsbQ), PsbU, PsbV and a large number of cofactors. It forms dimeric complexes.

It localises to the cellular thylakoid membrane. In terms of biological role, loosely associated component of the core of photosystem II (PSII), it is not always seen in crystals. PSII is a light-driven water plastoquinone oxidoreductase, using light energy to abstract electrons from H(2)O, generating a proton gradient subsequently used for ATP formation. This is Photosystem II reaction center protein Y from Microcystis aeruginosa (strain NIES-843 / IAM M-2473).